A 191-amino-acid chain; its full sequence is Ribonuclease HII (191 aa).

Residues 16–191 (INLIGIDEAG…KLHRKSFKLL (176 aa)) enclose the RNase H type-2 domain. Residues Asp-22, Glu-23, and Asp-110 each contribute to the a divalent metal cation site.

It belongs to the RNase HII family. Mn(2+) is required as a cofactor. Mg(2+) serves as cofactor.

It localises to the cytoplasm. It catalyses the reaction Endonucleolytic cleavage to 5'-phosphomonoester.. Endonuclease that specifically degrades the RNA of RNA-DNA hybrids. The sequence is that of Ribonuclease HII from Campylobacter jejuni subsp. doylei (strain ATCC BAA-1458 / RM4099 / 269.97).